Reading from the N-terminus, the 122-residue chain is Histone H2B, gonadal (122 aa).

Positions 1-31 (MPPKPSGKGQKKAGKAKGAPRTDKKRRRKRK) are disordered. At P2 the chain carries N,N-dimethylproline. S109 carries O-linked (GlcNAc) serine glycosylation. K117 participates in a covalent cross-link: Glycyl lysine isopeptide (Lys-Gly) (interchain with G-Cter in ubiquitin).

It belongs to the histone H2B family. As to quaternary structure, the nucleosome is a histone octamer containing two molecules each of H2A, H2B, H3 and H4 assembled in one H3-H4 heterotetramer and two H2A-H2B heterodimers. The octamer wraps approximately 147 bp of DNA. Monoubiquitination of Lys-117 gives a specific tag for epigenetic transcriptional activation and is also prerequisite for histone H3 'Lys-4' and 'Lys-79' methylation. In terms of processing, glcNAcylation at Ser-109 promotes monoubiquitination of Lys-117. It fluctuates in response to extracellular glucose, and associates with transcribed genes.

The protein resides in the nucleus. It is found in the chromosome. Its function is as follows. Core component of nucleosome. Nucleosomes wrap and compact DNA into chromatin, limiting DNA accessibility to the cellular machineries which require DNA as a template. Histones thereby play a central role in transcription regulation, DNA repair, DNA replication and chromosomal stability. DNA accessibility is regulated via a complex set of post-translational modifications of histones, also called histone code, and nucleosome remodeling. The protein is Histone H2B, gonadal of Asterias rubens (Common European starfish).